A 48-amino-acid polypeptide reads, in one-letter code: Protein PsbN (48 aa).

Residues 12-34 (LLIAMVTITFGLTGYGLYTAFGP) form a helical membrane-spanning segment.

This sequence belongs to the PsbN family.

Its subcellular location is the cellular thylakoid membrane. May play a role in photosystem I and II biogenesis. In Prochlorococcus marinus (strain MIT 9313), this protein is Protein PsbN.